The following is a 121-amino-acid chain: Protein yippee-like 5 (121 aa).

Positions 13-110 constitute a Yippee domain; that stretch reads RLFSCANCDT…LERALVRESE (98 aa). Zn(2+) contacts are provided by Cys-17, Cys-20, Cys-73, and Cys-76. A Phosphoserine modification is found at Ser-118.

The protein belongs to the yippee family. In terms of assembly, identified in the CTLH complex that contains GID4, RANBP9 and/or RANBP10, MKLN1, MAEA, RMND5A (or alternatively its paralog RMND5B), GID8, ARMC8, WDR26 and YPEL5. Within this complex, MAEA, RMND5A (or alternatively its paralog RMND5B), GID8, WDR26, and RANBP9 and/or RANBP10 form the catalytic core, while GID4, MKLN1, ARMC8 and YPEL5 have ancillary roles. Interacts with RANBP9 and RANBP10.

The protein resides in the nucleus. Its subcellular location is the cytoplasm. It localises to the cytoskeleton. The protein localises to the microtubule organizing center. It is found in the centrosome. The protein resides in the spindle pole. Its subcellular location is the midbody. Its function is as follows. Component of the CTLH E3 ubiquitin-protein ligase complex that selectively accepts ubiquitin from UBE2H and mediates ubiquitination and subsequent proteasomal degradation of the transcription factor HBP1. Required for normal cell proliferation. The chain is Protein yippee-like 5 (YPEL5) from Bos taurus (Bovine).